Reading from the N-terminus, the 419-residue chain is UDP-N-acetylglucosamine 1-carboxyvinyltransferase 2 (419 aa).

22 to 23 serves as a coordination point for phosphoenolpyruvate; sequence KN. Arginine 92 lines the UDP-N-acetyl-alpha-D-glucosamine pocket. Cysteine 116 acts as the Proton donor in catalysis. Cysteine 116 bears the 2-(S-cysteinyl)pyruvic acid O-phosphothioketal mark. UDP-N-acetyl-alpha-D-glucosamine-binding positions include 121 to 125, aspartate 306, and isoleucine 328; that span reads RPIDL.

This sequence belongs to the EPSP synthase family. MurA subfamily.

It is found in the cytoplasm. It catalyses the reaction phosphoenolpyruvate + UDP-N-acetyl-alpha-D-glucosamine = UDP-N-acetyl-3-O-(1-carboxyvinyl)-alpha-D-glucosamine + phosphate. Its pathway is cell wall biogenesis; peptidoglycan biosynthesis. Its function is as follows. Cell wall formation. Adds enolpyruvyl to UDP-N-acetylglucosamine. In Streptococcus mutans serotype c (strain ATCC 700610 / UA159), this protein is UDP-N-acetylglucosamine 1-carboxyvinyltransferase 2.